The sequence spans 370 residues: 4-hydroxy-3-methylbut-2-en-1-yl diphosphate synthase (flavodoxin) (370 aa).

[4Fe-4S] cluster contacts are provided by C268, C271, C303, and E310.

Belongs to the IspG family. [4Fe-4S] cluster serves as cofactor.

It catalyses the reaction (2E)-4-hydroxy-3-methylbut-2-enyl diphosphate + oxidized [flavodoxin] + H2O + 2 H(+) = 2-C-methyl-D-erythritol 2,4-cyclic diphosphate + reduced [flavodoxin]. The protein operates within isoprenoid biosynthesis; isopentenyl diphosphate biosynthesis via DXP pathway; isopentenyl diphosphate from 1-deoxy-D-xylulose 5-phosphate: step 5/6. In terms of biological role, converts 2C-methyl-D-erythritol 2,4-cyclodiphosphate (ME-2,4cPP) into 1-hydroxy-2-methyl-2-(E)-butenyl 4-diphosphate. This chain is 4-hydroxy-3-methylbut-2-en-1-yl diphosphate synthase (flavodoxin), found in Bacillus cereus (strain AH187).